A 404-amino-acid polypeptide reads, in one-letter code: Clavilactone A biosynthesis cluster protein Y (404 aa).

Its function is as follows. Part of the gene cluster that mediates the biosynthesis of clavilactone A, a meroterpenoid that features a unique benzo-fused ten-membered carbocyclic ring unit with an alpha,beta-epoxy-gamma-lactone moiety, forming an intriguing 10/5/3 tricyclic nested skeleton. ClaR, ClaS and ClaT are sufficient to produce clavilactone A and the function of claY, if any, has still to be identified. The biosynthesis begins with the prenyltransferase claS that transfers geranyl pyrophosphate (GPP) to hydroquinone to produces geranylhydroquinon. The cytochrome P450 monooxygenase claR then catalyzes the diradical coupling reaction between the intramolecular hydroquinone and allyl moieties to form the benzo-fused ten-membered carbocyclic ring unit of wigantol. Finally the cytochrome P450 monooxygenase claT exquisitely and stereoselectively assembles the alpha,beta-epoxy-gamma-lactone moiety, producing clavilactone A via arnebinol A. The polypeptide is Clavilactone A biosynthesis cluster protein Y (Ampulloclitocybe clavipes (Club foot)).